The primary structure comprises 414 residues: Multidrug resistance protein MdtG (414 aa).

The next 10 membrane-spanning stretches (helical) occupy residues 14-34, 56-76, 89-109, 113-133, 144-164, 171-191, 219-239, 254-274, 288-308, and 376-396; these read LFVTWLGCFLTGAAFSLIMPF, LVFSITFLFSAIAAPFWGSLA, ALGMGIVMVLMGMAQNIWQFL, ALLGLLGGFIPNANALIATQV, TLSTGGVSGALIGPLIGGLLA, PVFFITAAVLFACFVMTWFYV, ILSLFVTTMIIQIATGSIAPI, LAFVSGMIASVPGVAALISAP, ILIAMLALSVLILIPMAFVQT, and AVFCVTAVVVLFNALYSYWCL.

Belongs to the major facilitator superfamily. DHA1 family. MdtG (TC 2.A.1.2.20) subfamily.

The protein localises to the cell inner membrane. The polypeptide is Multidrug resistance protein MdtG (Yersinia enterocolitica serotype O:8 / biotype 1B (strain NCTC 13174 / 8081)).